We begin with the raw amino-acid sequence, 62 residues long: Defensin BmKDfsin5 (62 aa).

The signal sequence occupies residues 1–24; the sequence is MKVIALFFLFAFIFCTLEVAIVEA. Cystine bridges form between cysteine 28–cysteine 49, cysteine 35–cysteine 57, and cysteine 39–cysteine 59.

The protein belongs to the invertebrate defensin family. Type 2 subfamily. In terms of tissue distribution, highly expressed in non-venom gland (hemolymph) and moderately expressed in venom gland.

Its subcellular location is the secreted. Functionally, antibacterial peptide active against Gram-positive bacteria (including S.aureus ATCC25923 (MIC=2.5 uM), M.luteus AB93113 (MIC=2.5 uM), and the antibiotic-resistant S.epidermidis PRSE P1389 (MIC=1.25 uM)), but not against Gram-negative bacteria (including E.coli and P.aeruginosa). Also has weak blocking activity on Kv1.1/KCNA1 (8.7% inhibition), Kv1.2/KCNA2 (10.2% inhibition), Kv1.3/KCNA3 (9.0% inhibition), KCa3.1/KCNN4/IK (9.1% inhibition), KCa2.3/KCNN3/SK3 (46.3% inhibition) and Kv11.1/KCNH2/ERG1 (16.9% inhibition) channels (tested at 1 uM). It inhibits potassium channel current by interacting with the pore region. The polypeptide is Defensin BmKDfsin5 (Olivierus martensii (Manchurian scorpion)).